Here is a 295-residue protein sequence, read N- to C-terminus: Aspartate carbamoyltransferase catalytic subunit (295 aa).

2 residues coordinate carbamoyl phosphate: Arg49 and Thr50. An L-aspartate-binding site is contributed by Lys77. Carbamoyl phosphate is bound by residues Arg99, His127, and Gln130. Positions 161 and 212 each coordinate L-aspartate. The carbamoyl phosphate site is built by Gly251 and Pro252.

The protein belongs to the aspartate/ornithine carbamoyltransferase superfamily. ATCase family. As to quaternary structure, heterododecamer (2C3:3R2) of six catalytic PyrB chains organized as two trimers (C3), and six regulatory PyrI chains organized as three dimers (R2).

The enzyme catalyses carbamoyl phosphate + L-aspartate = N-carbamoyl-L-aspartate + phosphate + H(+). It functions in the pathway pyrimidine metabolism; UMP biosynthesis via de novo pathway; (S)-dihydroorotate from bicarbonate: step 2/3. In terms of biological role, catalyzes the condensation of carbamoyl phosphate and aspartate to form carbamoyl aspartate and inorganic phosphate, the committed step in the de novo pyrimidine nucleotide biosynthesis pathway. The sequence is that of Aspartate carbamoyltransferase catalytic subunit from Campylobacter jejuni subsp. jejuni serotype O:23/36 (strain 81-176).